The following is a 216-amino-acid chain: Probable calcium-binding protein CML35 (216 aa).

The disordered stretch occupies residues 18–58; that stretch reads TKSKASVSRSEPSSFSSNASSSSSDGSYGNLKQGPTATPIS. Positions 23–44 are enriched in low complexity; the sequence is SVSRSEPSSFSSNASSSSSDGS. EF-hand domains lie at 66-101, 103-138, 141-176, and 178-213; these read DFYT…LSHE, PSQE…TSGE, VETE…IGDE, and CTLE…AMND. D79, D81, D83, and D90 together coordinate Ca(2+). Ca(2+)-binding residues include D154, D156, N158, K160, E165, D191, N193, D195, and D202.

Functionally, potential calcium sensor. The sequence is that of Probable calcium-binding protein CML35 (CML35) from Arabidopsis thaliana (Mouse-ear cress).